A 602-amino-acid polypeptide reads, in one-letter code: Elongation factor 4 (602 aa).

A tr-type G domain is found at 2 to 184 (NHIRNFSIIA…QIVAKVPAPR (183 aa)). GTP-binding positions include 14–19 (DHGKST) and 131–134 (NKMD).

Belongs to the TRAFAC class translation factor GTPase superfamily. Classic translation factor GTPase family. LepA subfamily.

The protein localises to the cell inner membrane. The catalysed reaction is GTP + H2O = GDP + phosphate + H(+). Required for accurate and efficient protein synthesis under certain stress conditions. May act as a fidelity factor of the translation reaction, by catalyzing a one-codon backward translocation of tRNAs on improperly translocated ribosomes. Back-translocation proceeds from a post-translocation (POST) complex to a pre-translocation (PRE) complex, thus giving elongation factor G a second chance to translocate the tRNAs correctly. Binds to ribosomes in a GTP-dependent manner. The chain is Elongation factor 4 from Acidovorax ebreus (strain TPSY) (Diaphorobacter sp. (strain TPSY)).